A 328-amino-acid polypeptide reads, in one-letter code: L-lactate dehydrogenase (328 aa).

Residues Val-18, Glu-39, Lys-46, Tyr-71, and 85-86 contribute to the NAD(+) site; that span reads GA. Substrate contacts are provided by Gln-88 and Arg-94. NAD(+) contacts are provided by residues Ser-107, 124 to 126, and Ser-149; that span reads AAN. Residue 126–129 coordinates substrate; the sequence is NPVD. Residue 154–157 coordinates substrate; it reads DSAR. The beta-D-fructose 1,6-bisphosphate site is built by Arg-159 and His-174. His-181 functions as the Proton acceptor in the catalytic mechanism. Tyr-226 carries the phosphotyrosine modification. Position 235 (Thr-235) interacts with substrate.

This sequence belongs to the LDH/MDH superfamily. LDH family. Homotetramer.

It localises to the cytoplasm. The catalysed reaction is (S)-lactate + NAD(+) = pyruvate + NADH + H(+). It participates in fermentation; pyruvate fermentation to lactate; (S)-lactate from pyruvate: step 1/1. With respect to regulation, allosterically activated by fructose 1,6-bisphosphate (FBP). Catalyzes the conversion of lactate to pyruvate. The polypeptide is L-lactate dehydrogenase (Streptococcus pneumoniae (strain 70585)).